Reading from the N-terminus, the 100-residue chain is Phosphoribosyl-ATP pyrophosphatase (100 aa).

Belongs to the PRA-PH family.

The protein resides in the cytoplasm. It catalyses the reaction 1-(5-phospho-beta-D-ribosyl)-ATP + H2O = 1-(5-phospho-beta-D-ribosyl)-5'-AMP + diphosphate + H(+). It participates in amino-acid biosynthesis; L-histidine biosynthesis; L-histidine from 5-phospho-alpha-D-ribose 1-diphosphate: step 2/9. The chain is Phosphoribosyl-ATP pyrophosphatase (hisE) from Methanopyrus kandleri (strain AV19 / DSM 6324 / JCM 9639 / NBRC 100938).